The primary structure comprises 245 residues: Malonyl-[acyl-carrier protein] O-methyltransferase (245 aa).

Belongs to the methyltransferase superfamily.

It carries out the reaction malonyl-[ACP] + S-adenosyl-L-methionine = malonyl-[ACP] methyl ester + S-adenosyl-L-homocysteine. The protein operates within cofactor biosynthesis; biotin biosynthesis. In terms of biological role, converts the free carboxyl group of a malonyl-thioester to its methyl ester by transfer of a methyl group from S-adenosyl-L-methionine (SAM). It allows to synthesize pimeloyl-ACP via the fatty acid synthetic pathway. The protein is Malonyl-[acyl-carrier protein] O-methyltransferase of Calditerrivibrio nitroreducens (strain DSM 19672 / NBRC 101217 / Yu37-1).